A 477-amino-acid chain; its full sequence is Transmembrane and coiled-coil domain protein 3 (477 aa).

Positions 1 to 24 (MPGSDTALTVDRTYSDPGRHHRCK) are disordered. A Phosphoserine modification is found at Ser-46. Coiled-coil stretches lie at residues 63-83 (KVKLNADSLRQKILKVTEQIK) and 112-149 (KQVFEKKNQKSAHSIAQLQKKLEQYHRKLREIEQNGVT). The tract at residues 234–280 (ASPRAYGGSATIVNKPKYGSDDECSSGTSGSADSNGNQSFGAGGTST) is disordered. Residue Ser-253 is modified to Phosphoserine. The span at 258–280 (SSGTSGSADSNGNQSFGAGGTST) shows a compositional bias: polar residues. Positions 284 to 398 (QGKIAKIMEE…KLELHQQEQQ (115 aa)) form a coiled coil. Transmembrane regions (helical) follow at residues 409 to 429 (VLLGKCINVVLAFMTVILVCV) and 450 to 470 (FFAVTLLAIFCKNWDHILCAI).

It belongs to the TEX28 family. May form homodimers and heterodimers with TMCC2 or TMCC3 via the coiled-coil domains. Interacts with ribosomal proteins RPL4 and RPS6.

The protein localises to the endoplasmic reticulum membrane. The sequence is that of Transmembrane and coiled-coil domain protein 3 from Mus musculus (Mouse).